The chain runs to 289 residues: Thioredoxin-like protein 1 (289 aa).

One can recognise a Thioredoxin domain in the interval 2-109 (VGVKPVGSDP…EEKIKQHLEN (108 aa)). A disulfide bridge connects residues Cys-34 and Cys-37. A Phosphoserine modification is found at Ser-113. Positions 115-285 (EDADIPKGYM…NDFKRVVGKK (171 aa)) constitute a PITH domain.

As to quaternary structure, component of the 19S regulatory cap of the 26S proteasome. Interacts with PSMD14/RPN11. Interacts with, and reduces EEF1A1.

It is found in the cytoplasm. The protein localises to the nucleus. Its function is as follows. Active thioredoxin with a redox potential of about -250 mV. The chain is Thioredoxin-like protein 1 (Txnl1) from Mus musculus (Mouse).